The sequence spans 94 residues: Putative regulatory protein THA_332 (94 aa).

Belongs to the RemA family.

This is Putative regulatory protein THA_332 from Thermosipho africanus (strain TCF52B).